A 92-amino-acid polypeptide reads, in one-letter code: Small ribosomal subunit protein uS19 (92 aa).

The protein belongs to the universal ribosomal protein uS19 family.

Protein S19 forms a complex with S13 that binds strongly to the 16S ribosomal RNA. The sequence is that of Small ribosomal subunit protein uS19 from Rhizobium rhizogenes (strain K84 / ATCC BAA-868) (Agrobacterium radiobacter).